A 120-amino-acid polypeptide reads, in one-letter code: U-scoloptoxin(20)-Cw1a (120 aa).

A signal peptide spans 1–26 (MNSTDRLLGVLLAVVALILLIRISEA). The disordered stretch occupies residues 87–106 (SSGKSLTTTKDSSESRKKEI). The span at 97–106 (DSSESRKKEI) shows a compositional bias: basic and acidic residues.

Belongs to the scoloptoxin-20 family. In terms of processing, contains 3 disulfide bonds. Expressed by the venom gland.

It is found in the secreted. This is U-scoloptoxin(20)-Cw1a from Cormocephalus westwoodi (Westwood's green centipede).